A 207-amino-acid polypeptide reads, in one-letter code: Small ribosomal subunit protein uS4 (207 aa).

Positions 97 to 160 (SRLDNVVYRM…KKQARIVEAL (64 aa)) constitute an S4 RNA-binding domain.

Belongs to the universal ribosomal protein uS4 family. As to quaternary structure, part of the 30S ribosomal subunit. Contacts protein S5. The interaction surface between S4 and S5 is involved in control of translational fidelity.

Its function is as follows. One of the primary rRNA binding proteins, it binds directly to 16S rRNA where it nucleates assembly of the body of the 30S subunit. With S5 and S12 plays an important role in translational accuracy. The sequence is that of Small ribosomal subunit protein uS4 from Burkholderia pseudomallei (strain 1106a).